Here is a 336-residue protein sequence, read N- to C-terminus: Ferredoxin--NADP reductase 1 (336 aa).

FAD contacts are provided by E37, K45, F50, V90, L125, D287, and T328.

It belongs to the ferredoxin--NADP reductase type 2 family. Homodimer. Requires FAD as cofactor.

The enzyme catalyses 2 reduced [2Fe-2S]-[ferredoxin] + NADP(+) + H(+) = 2 oxidized [2Fe-2S]-[ferredoxin] + NADPH. This is Ferredoxin--NADP reductase 1 from Bacillus velezensis (strain DSM 23117 / BGSC 10A6 / LMG 26770 / FZB42) (Bacillus amyloliquefaciens subsp. plantarum).